A 134-amino-acid polypeptide reads, in one-letter code: MRLGRRTSKQEEAQIDLTSMLDIVFIMLIFFIVTSSFVRESGVEVNRPTAAHAVSQKQAGIFVAITAANDIYIDKRQVDVERVQATLEHLLLDQPDASLVIQADEHAFNGTVVKVMDAAKGAGVKSIALAAEKP.

The Cytoplasmic portion of the chain corresponds to 1–17 (MRLGRRTSKQEEAQIDL). Residues 18–38 (TSMLDIVFIMLIFFIVTSSFV) form a helical membrane-spanning segment. The Periplasmic portion of the chain corresponds to 39–134 (RESGVEVNRP…KSIALAAEKP (96 aa)).

The protein belongs to the ExbD/TolR family. In terms of assembly, the accessory proteins ExbB and ExbD seem to form a complex with TonB.

The protein localises to the cell inner membrane. In terms of biological role, involved in the TonB-dependent energy-dependent transport of various receptor-bound substrates. The sequence is that of Biopolymer transport protein exbD2 (exbD2) from Vibrio cholerae serotype O1 (strain ATCC 39315 / El Tor Inaba N16961).